A 513-amino-acid polypeptide reads, in one-letter code: Aromatic amino acid aminotransferase 2 (513 aa).

Phosphoserine occurs at positions 90 and 92. Pyridoxal 5'-phosphate contacts are provided by residues Tyr102, Ser143–Asn144, Asn232, Tyr263, and Thr314–Ser316. Asn232 lines the substrate pocket. Lys317 carries the N6-(pyridoxal phosphate)lysine modification. Arg324 contributes to the pyridoxal 5'-phosphate binding site. Arg481 provides a ligand contact to substrate.

Belongs to the class-I pyridoxal-phosphate-dependent aminotransferase family. The cofactor is pyridoxal 5'-phosphate.

The protein resides in the cytoplasm. The enzyme catalyses an aromatic L-alpha-amino acid + 2-oxoglutarate = an aromatic oxo-acid + L-glutamate. It carries out the reaction an aromatic L-alpha-amino acid + 4-methylsulfanyl-2-oxobutanoate = an aromatic oxo-acid + L-methionine. The catalysed reaction is L-kynurenine + 2-oxoglutarate = kynurenate + L-glutamate + H2O. The protein operates within amino-acid biosynthesis; L-methionine biosynthesis via salvage pathway; L-methionine from S-methyl-5-thio-alpha-D-ribose 1-phosphate: step 6/6. It participates in amino-acid degradation; L-kynurenine degradation; kynurenate from L-kynurenine: step 1/2. Functionally, general aromatic amino acid transaminase involved in several otherwise unrelated metabolic pathways. Mainly involved in tryptophan degradation. Active with phenylalanine, tyrosine and tryptophan as amino donors and with phenylpyruvate, hydroxyphenylpyruvate and pyruvate as amino acceptors. Does not accept glutamate or 2-oxoglutarate as substrates. Also active with methionine, leucine, glutamine and kynurenine. Catalyzes the formation of methionine from 2-keto-4-methylthiobutyrate (KMTB) in the methionine salvage pathway primarily using aromatic amino acids (tyrosine, phenylalanine and tryptophan) as the amino donors. Catalyzes the irreversible transamination of the L-tryptophan metabolite L-kynurenine to form kynurenic acid (KA) with pyruvate as amino acceptor. This is Aromatic amino acid aminotransferase 2 from Saccharomyces cerevisiae (strain ATCC 204508 / S288c) (Baker's yeast).